The sequence spans 590 residues: Aspartate--tRNA(Asp/Asn) ligase (590 aa).

E172 provides a ligand contact to L-aspartate. The interval 196–199 (QLFK) is aspartate. Residue R218 participates in L-aspartate binding. ATP is bound by residues 218–220 (RDE) and Q227. H449 is a binding site for L-aspartate. E484 lines the ATP pocket. R491 serves as a coordination point for L-aspartate. 536–539 (GVDR) is a binding site for ATP.

It belongs to the class-II aminoacyl-tRNA synthetase family. Type 1 subfamily. In terms of assembly, homodimer.

The protein resides in the cytoplasm. It carries out the reaction tRNA(Asx) + L-aspartate + ATP = L-aspartyl-tRNA(Asx) + AMP + diphosphate. Functionally, aspartyl-tRNA synthetase with relaxed tRNA specificity since it is able to aspartylate not only its cognate tRNA(Asp) but also tRNA(Asn). Reaction proceeds in two steps: L-aspartate is first activated by ATP to form Asp-AMP and then transferred to the acceptor end of tRNA(Asp/Asn). The chain is Aspartate--tRNA(Asp/Asn) ligase from Francisella tularensis subsp. holarctica (strain FTNF002-00 / FTA).